Consider the following 417-residue polypeptide: Mast cell carboxypeptidase A (417 aa).

The N-terminal stretch at 1 to 15 is a signal peptide; the sequence is MRLILPVGLIATTLA. Residues 16–109 constitute a propeptide, activation peptide; it reads IAPVRFDREK…IEKQFDVKED (94 aa). Residues 118–412 enclose the Peptidase M14 domain; it reads KYNNWEKIVA…LAVKFIAKYI (295 aa). Cystine bridges form between Cys-173–Cys-186 and Cys-245–Cys-268. Residues His-176 and Glu-179 each contribute to the Zn(2+) site. His-304 contacts Zn(2+). The Proton donor/acceptor role is filled by Glu-378.

The protein belongs to the peptidase M14 family. Zn(2+) is required as a cofactor.

It is found in the cytoplasmic vesicle. It localises to the secretory vesicle. It catalyses the reaction Release of a C-terminal amino acid, but little or no action with -Asp, -Glu, -Arg, -Lys or -Pro.. The polypeptide is Mast cell carboxypeptidase A (CPA3) (Homo sapiens (Human)).